A 576-amino-acid chain; its full sequence is Sulfite reductase [NADPH] hemoprotein beta-component (576 aa).

Residues Cys-435, Cys-441, Cys-480, and Cys-484 each coordinate [4Fe-4S] cluster. Residue Cys-484 participates in siroheme binding.

The protein belongs to the nitrite and sulfite reductase 4Fe-4S domain family. As to quaternary structure, alpha(8)-beta(8). The alpha component is a flavoprotein, the beta component is a hemoprotein. It depends on siroheme as a cofactor. [4Fe-4S] cluster serves as cofactor.

The enzyme catalyses hydrogen sulfide + 3 NADP(+) + 3 H2O = sulfite + 3 NADPH + 4 H(+). It functions in the pathway sulfur metabolism; hydrogen sulfide biosynthesis; hydrogen sulfide from sulfite (NADPH route): step 1/1. In terms of biological role, component of the sulfite reductase complex that catalyzes the 6-electron reduction of sulfite to sulfide. This is one of several activities required for the biosynthesis of L-cysteine from sulfate. This chain is Sulfite reductase [NADPH] hemoprotein beta-component, found in Yersinia pestis bv. Antiqua (strain Antiqua).